Here is a 179-residue protein sequence, read N- to C-terminus: Adenine phosphoribosyltransferase (179 aa).

The protein belongs to the purine/pyrimidine phosphoribosyltransferase family. Homodimer.

The protein resides in the cytoplasm. It catalyses the reaction AMP + diphosphate = 5-phospho-alpha-D-ribose 1-diphosphate + adenine. The protein operates within purine metabolism; AMP biosynthesis via salvage pathway; AMP from adenine: step 1/1. In terms of biological role, catalyzes a salvage reaction resulting in the formation of AMP, that is energically less costly than de novo synthesis. This Helicobacter acinonychis (strain Sheeba) protein is Adenine phosphoribosyltransferase.